We begin with the raw amino-acid sequence, 468 residues long: Alpha-N-acetylgalactosaminidase (468 aa).

The tat-type signal signal peptide spans 1–30; the sequence is MENTRRNFLKKVTAAGIGAAGLAVTDQAMA. Residues 62–63, D84, 133–136, 154–155, and N183 contribute to the NAD(+) site; these read SR, WEWH, and EV. Y212 is a binding site for substrate. Residue 243 to 247 participates in NAD(+) binding; sequence AEAQW. Residues R248, 260-263, and Y342 contribute to the substrate site; that span reads YPTH. Y260 serves as a coordination point for NAD(+).

It belongs to the Gfo/Idh/MocA family. Glycosyl hydrolase 109 subfamily. NAD(+) is required as a cofactor. Post-translationally, predicted to be exported by the Tat system. The position of the signal peptide cleavage has not been experimentally proven.

The enzyme catalyses Cleavage of non-reducing alpha-(1-&gt;3)-N-acetylgalactosamine residues from human blood group A and AB mucin glycoproteins, Forssman hapten and blood group A lacto series glycolipids.. In terms of biological role, glycosidase that has specific alpha-N-acetylgalactosaminidase activity. This Tannerella forsythia (Bacteroides forsythus) protein is Alpha-N-acetylgalactosaminidase (nagA).